A 78-amino-acid chain; its full sequence is Large ribosomal subunit protein bL28 (78 aa).

This sequence belongs to the bacterial ribosomal protein bL28 family.

The polypeptide is Large ribosomal subunit protein bL28 (Pasteurella multocida (strain Pm70)).